Reading from the N-terminus, the 415-residue chain is Putative F-box protein At5g40050 (415 aa).

The F-box domain occupies 13–59 (IDSISPLPDELLSHILSFLPTKRAASTSILSKRWRTLFPLMNHLCAS).

The sequence is that of Putative F-box protein At5g40050 from Arabidopsis thaliana (Mouse-ear cress).